We begin with the raw amino-acid sequence, 156 residues long: Small ribosomal subunit protein uS7 (156 aa).

The protein belongs to the universal ribosomal protein uS7 family. As to quaternary structure, part of the 30S ribosomal subunit. Contacts proteins S9 and S11.

In terms of biological role, one of the primary rRNA binding proteins, it binds directly to 16S rRNA where it nucleates assembly of the head domain of the 30S subunit. Is located at the subunit interface close to the decoding center, probably blocks exit of the E-site tRNA. In Thermodesulfovibrio yellowstonii (strain ATCC 51303 / DSM 11347 / YP87), this protein is Small ribosomal subunit protein uS7.